Consider the following 346-residue polypeptide: Methionine import ATP-binding protein MetN 1 (346 aa).

Residues 2-241 (IELKNVSKVF…PQHVTTKKFV (240 aa)) enclose the ABC transporter domain. 38–45 (GYSGAGKS) provides a ligand contact to ATP.

It belongs to the ABC transporter superfamily. Methionine importer (TC 3.A.1.24) family. In terms of assembly, the complex is composed of two ATP-binding proteins (MetN), two transmembrane proteins (MetI) and a solute-binding protein (MetQ).

Its subcellular location is the cell membrane. The catalysed reaction is L-methionine(out) + ATP + H2O = L-methionine(in) + ADP + phosphate + H(+). It catalyses the reaction D-methionine(out) + ATP + H2O = D-methionine(in) + ADP + phosphate + H(+). Functionally, part of the ABC transporter complex MetNIQ involved in methionine import. Responsible for energy coupling to the transport system. In Bacillus cereus (strain ATCC 14579 / DSM 31 / CCUG 7414 / JCM 2152 / NBRC 15305 / NCIMB 9373 / NCTC 2599 / NRRL B-3711), this protein is Methionine import ATP-binding protein MetN 1.